A 93-amino-acid chain; its full sequence is Cell division protein CrgA (93 aa).

2 helical membrane-spanning segments follow: residues 31–51 (VWFVSLFIGLMLIGLIWLMVF) and 70–90 (LGPWNYAIAFAFMITGLLLTM).

Belongs to the CrgA family.

The protein localises to the cell membrane. Its function is as follows. Involved in cell division. This is Cell division protein CrgA from Mycobacterium bovis (strain ATCC BAA-935 / AF2122/97).